The sequence spans 859 residues: Low-density lipoprotein receptor-related protein 12 (859 aa).

The signal sequence occupies residues 1–32 (MARRWSTKESPRWRSALLLLFLAGVYGNGALA). Topologically, residues 33–492 (EHSENVHISG…ENCPVIVPTR (460 aa)) are extracellular. Cystine bridges form between C47-C76 and C103-C122. The 113-residue stretch at 47 to 159 (CGETPEQIRA…KGFRLAYFSG (113 aa)) folds into the CUB 1 domain. The N-linked (GlcNAc...) asparagine glycan is linked to N75. N-linked (GlcNAc...) asparagine glycosylation is present at N146. LDL-receptor class A domains are found at residues 165–201 (NCAC…EICA) and 214–255 (PCAY…IDCD). 7 disulfides stabilise this stretch: C166–C178, C173–C191, C185–C200, C215–C232, C222–C245, C239–C254, and C259–C285. The region spanning 259 to 372 (CGQWLKYFYG…RGFNATYQVD (114 aa)) is the CUB 2 domain. N-linked (GlcNAc...) asparagine glycans are attached at residues N284 and N366. LDL-receptor class A domains are found at residues 374–411 (FCLP…INCT), 412–449 (MCQK…KNCF), and 450–486 (FCQP…ENCP). 9 cysteine pairs are disulfide-bonded: C375-C388, C382-C401, C395-C410, C413-C426, C420-C439, C433-C448, C451-C463, C458-C476, and C470-C485. An N-linked (GlcNAc...) asparagine glycan is attached at N409. N441 carries an N-linked (GlcNAc...) asparagine glycan. The chain crosses the membrane as a helical span at residues 493–513 (VITAAVIGSLICGLLLVIALG). The Cytoplasmic portion of the chain corresponds to 514 to 859 (CTCKLYSLRM…TSDDEALLLC (346 aa)). Disordered regions lie at residues 623-678 (ADGD…LPQK), 693-723 (ASSS…SPAR), 748-770 (SSVS…REDD), and 802-823 (QGQG…SNRD). Composition is skewed to polar residues over residues 748–757 (SSVSQNQSPL) and 802–814 (QGQG…NATN).

The protein belongs to the LDLR family. As to quaternary structure, may interact with RACK1, ZFYVE9 and NMRK2.

It localises to the membrane. The protein localises to the coated pit. Its function is as follows. Probable receptor, which may be involved in the internalization of lipophilic molecules and/or signal transduction. May act as a tumor suppressor. The protein is Low-density lipoprotein receptor-related protein 12 (LRP12) of Pongo abelii (Sumatran orangutan).